Reading from the N-terminus, the 147-residue chain is Hemoglobin subunit delta (147 aa).

The Globin domain occupies asparagine 3–histidine 147. Positions 64 and 93 each coordinate heme b.

Belongs to the globin family. In terms of assembly, heterotetramer of two delta chains and two alpha chains. As to expression, red blood cells.

In Elephas maximus (Indian elephant), this protein is Hemoglobin subunit delta (HBD).